The chain runs to 251 residues: MKKAGLLFLVMIVIAVVAAGIGYWKLTGEESDTLRKIVLEQCLPNQQENQNPSPCAEVKPNAGYVVLKDRHGPLQYLLMPTYRINGTESPLLTDPSTPNFFWLAWQARDFMSQKYGQPVPDRAVSLAINSRTGRTQNHFHIHISCIRPDVREQLDNNLANISSRWLPLPGGLRGHEYLARRVTESELVQRSPFMMLAEEVPEAREHMGSYGLAMVRQSDNSFVLLATQRNLLTLNRASAEEIQDHQCEILR.

Residues 4-24 (AGLLFLVMIVIAVVAAGIGYW) traverse the membrane as a helical segment.

Belongs to the Cdh family.

Its subcellular location is the cell inner membrane. It carries out the reaction a CDP-1,2-diacyl-sn-glycerol + H2O = a 1,2-diacyl-sn-glycero-3-phosphate + CMP + 2 H(+). It functions in the pathway phospholipid metabolism; CDP-diacylglycerol degradation; phosphatidate from CDP-diacylglycerol: step 1/1. This is CDP-diacylglycerol pyrophosphatase from Escherichia coli O127:H6 (strain E2348/69 / EPEC).